Consider the following 132-residue polypeptide: Small ribosomal subunit protein uS8 (132 aa).

This sequence belongs to the universal ribosomal protein uS8 family. As to quaternary structure, part of the 30S ribosomal subunit. Contacts proteins S5 and S12.

Its function is as follows. One of the primary rRNA binding proteins, it binds directly to 16S rRNA central domain where it helps coordinate assembly of the platform of the 30S subunit. This Anaeromyxobacter dehalogenans (strain 2CP-1 / ATCC BAA-258) protein is Small ribosomal subunit protein uS8.